Reading from the N-terminus, the 302-residue chain is Glutamyl-Q tRNA(Asp) synthetase (302 aa).

Residues 13-17 (RFAPS) and D49 each bind L-glutamate. Positions 16-26 (PSPTGPLHLGS) match the 'HIGH' region motif. Positions 105, 107, 119, and 123 each coordinate Zn(2+). 2 residues coordinate L-glutamate: Y178 and R196. Residues 234 to 238 (KLSKQ) carry the 'KMSKS' region motif. K237 lines the ATP pocket.

Belongs to the class-I aminoacyl-tRNA synthetase family. GluQ subfamily. It depends on Zn(2+) as a cofactor.

Its function is as follows. Catalyzes the tRNA-independent activation of glutamate in presence of ATP and the subsequent transfer of glutamate onto a tRNA(Asp). Glutamate is transferred on the 2-amino-5-(4,5-dihydroxy-2-cyclopenten-1-yl) moiety of the queuosine in the wobble position of the QUC anticodon. The chain is Glutamyl-Q tRNA(Asp) synthetase from Methylococcus capsulatus (strain ATCC 33009 / NCIMB 11132 / Bath).